The sequence spans 427 residues: Inward rectifier potassium channel 2 (427 aa).

Topologically, residues 1–81 (MGSVRTNRYS…IFTTCVDIRW (81 aa)) are cytoplasmic. C76 carries the S-nitrosocysteine modification. The helical transmembrane segment at 82–106 (RWMLVIFCLAFVLSWLFFGCVFWLI) threads the bilayer. The Extracellular segment spans residues 107–128 (ALLHGDLDASKESKACVSEVNS). An intramembrane region (helical; Pore-forming) is located at residues 129–140 (FTAAFLFSIETQ). The pore-forming intramembrane region spans 141–147 (TTIGYGF). The short motif at 142–147 (TIGYGF) is the Selectivity filter element. Topologically, residues 148-156 (RCVTDECPI) are extracellular. A helical transmembrane segment spans residues 157-178 (AVFMVVFQSIVGCIIDAFIIGA). Over 179 to 427 (VMAKMAKPKK…PRPLRRESEI (249 aa)) the chain is Cytoplasmic. The tract at residues 181–208 (AKMAKPKKRNETLVFSHNAVIAMRDGKL) is polyphosphoinositide (PIP2)-binding. Residues 384-427 (SKEEDDSENGVPESTSTDTPPDIDLHNQASVPLEPRPLRRESEI) are disordered. A PDZ-binding motif is present at residues 425-427 (SEI).

It belongs to the inward rectifier-type potassium channel (TC 1.A.2.1) family. KCNJ2 subfamily. Homotetramer. Homomultimeric and heteromultimeric association with KCNJ4/Kir2.3. Can form heteromeric channels with Kir2.6/KCNJ18. Associates, via its PDZ-recognition domain, with a complex containing LIN7A, LIN7B, LIN7C, DLG1, CASK and APBA1. Post-translationally, S-nitrosylation increases the open probability and inward rectifying currents.

It is found in the cell membrane. It localises to the sarcolemma. The protein resides in the T-tubule. The catalysed reaction is K(+)(in) = K(+)(out). Its activity is regulated as follows. Activated by phosphatidylinositol 4,5 biphosphate (PtdIns(4,5)P2). Its function is as follows. Inward rectifier potassium channels are characterized by a greater tendency to allow potassium to flow into the cell rather than out of it. Their voltage dependence is regulated by the concentration of extracellular potassium; as external potassium is raised, the voltage range of the channel opening shifts to more positive voltages. The inward rectification is mainly due to the blockage of outward current by internal magnesium. Blocked by external barium or cesium. Probably participates in establishing action potential waveform and excitability of neuronal and muscle tissues. The polypeptide is Inward rectifier potassium channel 2 (KCNJ2) (Cavia porcellus (Guinea pig)).